A 466-amino-acid polypeptide reads, in one-letter code: 3-isopropylmalate dehydratase large subunit (466 aa).

3 residues coordinate [4Fe-4S] cluster: Cys347, Cys408, and Cys411.

The protein belongs to the aconitase/IPM isomerase family. LeuC type 1 subfamily. As to quaternary structure, heterodimer of LeuC and LeuD. [4Fe-4S] cluster is required as a cofactor.

The enzyme catalyses (2R,3S)-3-isopropylmalate = (2S)-2-isopropylmalate. It participates in amino-acid biosynthesis; L-leucine biosynthesis; L-leucine from 3-methyl-2-oxobutanoate: step 2/4. Catalyzes the isomerization between 2-isopropylmalate and 3-isopropylmalate, via the formation of 2-isopropylmaleate. This is 3-isopropylmalate dehydratase large subunit from Herminiimonas arsenicoxydans.